Consider the following 305-residue polypeptide: Heme A synthase (305 aa).

At 1 to 6 (MKKFLK) the chain is on the cytoplasmic side. A helical transmembrane segment spans residues 7–27 (VWSVLTIICMTVVVFGGALVT). At 28–63 (KTGSADGCGNSWPLCNGQLVRLTDVTPEKLIEFMHR) the chain is on the extracellular side. Cys-35 and Cys-42 are joined by a disulfide. The active site involves Glu-59. His-62 is a heme o binding site. A helical transmembrane segment spans residues 64–84 (MTTGISSIFVIVLAICAWIYM). Topologically, residues 85–92 (KNRRETKP) are cytoplasmic. A helical membrane pass occupies residues 93 to 113 (LAIIAVLFLIIQALMGMAAVV). The Extracellular portion of the chain corresponds to 114-122 (WGQNPYIMA). A helical membrane pass occupies residues 123–143 (LHFGISIICYASIVLLALMIF). His-124 provides a ligand contact to heme o. Topologically, residues 144 to 160 (EVDRKFDARNLVMGTKL) are cytoplasmic. A helical membrane pass occupies residues 161–181 (RINIYALTIYTYLAVYTGALV). The Extracellular portion of the chain corresponds to 182–212 (RHEKASMAVPVWPFENGHFIMPTSVQDYVQY). The helical transmembrane segment at 213-233 (FHRLAAFILIVWLLYVTWLVF) threads the bilayer. His-214 serves as a coordination point for heme b. Residues 234-240 (RDYRRYR) lie on the Cytoplasmic side of the membrane. Residues 241–261 (VLTFSMVLSLVFIALQAVTGA) form a helical membrane-spanning segment. Over 262–271 (LSVYTGVNLY) the chain is Extracellular. The chain crosses the membrane as a helical span at residues 272–292 (IALAHSLIITMLFALLCYLCL). Residue His-276 coordinates heme b. Over 293–305 (LASRSKSNRLRIK) the chain is Cytoplasmic.

Belongs to the COX15/CtaA family. Type 1 subfamily. Interacts with CtaB. Heme b serves as cofactor.

It is found in the cell membrane. It catalyses the reaction Fe(II)-heme o + 2 A + H2O = Fe(II)-heme a + 2 AH2. It functions in the pathway porphyrin-containing compound metabolism; heme A biosynthesis; heme A from heme O: step 1/1. Catalyzes the conversion of heme O to heme A by two successive hydroxylations of the methyl group at C8. The first hydroxylation forms heme I, the second hydroxylation results in an unstable dihydroxymethyl group, which spontaneously dehydrates, resulting in the formyl group of heme A. The chain is Heme A synthase from Listeria monocytogenes serotype 4b (strain F2365).